The following is a 282-amino-acid chain: Biotin synthase (282 aa).

Residues 1 to 228 (MQEIFLCSIS…NARLMVAGGR (228 aa)) enclose the Radical SAM core domain. 3 residues coordinate [4Fe-4S] cluster: Cys-17, Cys-21, and Cys-24. The [2Fe-2S] cluster site is built by Cys-61, Cys-96, Cys-154, and Arg-221.

The protein belongs to the radical SAM superfamily. Biotin synthase family. As to quaternary structure, homodimer. It depends on [4Fe-4S] cluster as a cofactor. [2Fe-2S] cluster is required as a cofactor.

The catalysed reaction is (4R,5S)-dethiobiotin + (sulfur carrier)-SH + 2 reduced [2Fe-2S]-[ferredoxin] + 2 S-adenosyl-L-methionine = (sulfur carrier)-H + biotin + 2 5'-deoxyadenosine + 2 L-methionine + 2 oxidized [2Fe-2S]-[ferredoxin]. Its pathway is cofactor biosynthesis; biotin biosynthesis; biotin from 7,8-diaminononanoate: step 2/2. Its function is as follows. Catalyzes the conversion of dethiobiotin (DTB) to biotin by the insertion of a sulfur atom into dethiobiotin via a radical-based mechanism. In Helicobacter pylori (strain Shi470), this protein is Biotin synthase.